A 158-amino-acid polypeptide reads, in one-letter code: Succinate dehydrogenase [ubiquinone] cytochrome b small subunit, mitochondrial (158 aa).

The transit peptide at 1–55 directs the protein to the mitochondrion; it reads MALWRLSVLCGAREGRALFLRTPVVRPALVSAFLQDRPAQGWCGTQHIHLSPSHH. Topologically, residues 56–62 are mitochondrial matrix; that stretch reads SGSKAAS. The chain crosses the membrane as a helical span at residues 63 to 84; that stretch reads LHWTGERVVSVLLLGLIPAAYL. Over 85–89 the chain is Mitochondrial intermembrane; that stretch reads NPCSA. Residues 90 to 110 traverse the membrane as a helical segment; it reads MDYSLAATLTLHSHWGIGQVV. A heme b-binding site is contributed by His101. The Mitochondrial matrix segment spans residues 111–119; that stretch reads TDYVHGDAV. Residue Tyr113 coordinates a ubiquinone. Residues 120–141 form a helical membrane-spanning segment; it reads QKAAKTGLLVLSAFTFAGLCYF. Residues 142-158 are Mitochondrial intermembrane-facing; the sequence is NYHDVGICKAVAMLWKL.

The protein belongs to the CybS family. As to quaternary structure, component of complex II composed of four subunits: the flavoprotein (FP) SDHA, iron-sulfur protein (IP) SDHB, and a cytochrome b560 composed of SDHC and SDHD.

The protein localises to the mitochondrion inner membrane. It participates in carbohydrate metabolism; tricarboxylic acid cycle. Functionally, membrane-anchoring subunit of succinate dehydrogenase (SDH) that is involved in complex II of the mitochondrial electron transport chain and is responsible for transferring electrons from succinate to ubiquinone (coenzyme Q). SDH also oxidizes malate to the non-canonical enol form of oxaloacetate, enol-oxaloacetate. Enol-oxaloacetate, which is a potent inhibitor of the succinate dehydrogenase activity, is further isomerized into keto-oxaloacetate. This is Succinate dehydrogenase [ubiquinone] cytochrome b small subunit, mitochondrial (SDHD) from Bos taurus (Bovine).